Consider the following 265-residue polypeptide: Dehydrin COR47 (265 aa).

The span at 1–14 shows a compositional bias: basic and acidic residues; it reads MAEEYKNNVPEHET. A disordered region spans residues 1-265; that stretch reads MAEEYKNNVP…EVKKEKESDD (265 aa). At alanine 2 the chain carries N-acetylalanine. The segment covering 16–28 has biased composition (polar residues); it reads TVATEESPATTTE. Residues 29–47 are compositionally biased toward basic and acidic residues; sequence VTDRGLFDFLGKKEEEVKP. Serine 64 carries the post-translational modification Phosphoserine. Basic and acidic residues predominate over residues 69–79; the sequence is AAEHEEVKENK. Position 90 is a phosphothreonine (threonine 90). Basic and acidic residues-rich tracts occupy residues 96 to 105 and 129 to 156; these read NKPSVIEKLH and IVEG…KTAE. Repeat unit 1 spans residues 133–153; it reads EEDKKGLVEKIKEKLPGHHDK. Residues 133-251 form a 3 X 21 AA repeats, Lys-rich region; that stretch reads EEDKKGLVEK…KEKLPGYHAK (119 aa). The segment covering 160 to 172 has biased composition (low complexity); sequence PVSTTIPVPVSES. Composition is skewed to basic and acidic residues over residues 173 to 204 and 227 to 265; these read VVEH…KAED and PVEH…ESDD. 2 consecutive repeat copies span residues 180–200 and 231–251.

The protein belongs to the plant dehydrin family.

This chain is Dehydrin COR47 (COR47), found in Arabidopsis thaliana (Mouse-ear cress).